A 219-amino-acid chain; its full sequence is Ras-related protein Rab-3D (219 aa).

Ala2 is subject to N-acetylalanine. A GDP-binding site is contributed by 29–37 (GNSSVGKTS). The GTP site is built by Ser31, Ser32, Val33, Gly34, Lys35, Thr36, Ser37, Pro49, and Ser53. Residue Thr36 participates in Mg(2+) binding. A Switch 1 motif is present at residues 49-58 (PAFVSTVGID). Thr54 and Asp77 together coordinate Mg(2+). Gly80 serves as a coordination point for GTP. The Switch 2 motif lies at 80 to 96 (GQERYRTITTAYYRGAM). Thr86 carries the phosphothreonine; by LRRK2 modification. Positions 135, 136, 138, 166, and 167 each coordinate GTP. Residues 135 to 138 (NKCD) and 165 to 167 (SAK) each bind GDP. Ser190 bears the Phosphoserine mark. Low complexity predominate over residues 190–199 (SLEPSSSSGS). The tract at residues 190-219 (SLEPSSSSGSNGKGPAVGDAPAPQPSSCSC) is disordered. 2 S-geranylgeranyl cysteine lipidation sites follow: Cys217 and Cys219. Position 219 is a cysteine methyl ester (Cys219).

This sequence belongs to the small GTPase superfamily. Rab family. As to quaternary structure, interacts with RIMS1, RIMS2, RPH3A, RPH3AL and RAB3IP. The GTP-bound form interacts with REP15. Interacts with CHM and CHML; phosphorylation at Thr-86 disrupts these interactions. Interacts with MADD (via uDENN domain); the GTP-bound form is preferred for interaction. Mg(2+) is required as a cofactor. In terms of processing, phosphorylation of Thr-86 in the switch II region by LRRK2 prevents the association of RAB regulatory proteins, including CHM and CHML. As to expression, highly expressed in granulocytes of peripheral blood. Constitutively expressed at low levels in all hematopoietic cell lines investigated.

The protein resides in the cell membrane. The enzyme catalyses GTP + H2O = GDP + phosphate + H(+). Its activity is regulated as follows. Regulated by guanine nucleotide exchange factors (GEFs) which promote the exchange of bound GDP for free GTP. Regulated by GTPase activating proteins (GAPs) which increase the GTP hydrolysis activity. Inhibited by GDP dissociation inhibitors (GDIs) which prevent Rab-GDP dissociation. Its function is as follows. The small GTPases Rab are key regulators of intracellular membrane trafficking, from the formation of transport vesicles to their fusion with membranes. Rabs cycle between an inactive GDP-bound form and an active GTP-bound form that is able to recruit to membranes different sets of downstream effectors directly responsible for vesicle formation, movement, tethering and fusion. RAB3D may be involved in the insulin-induced exocytosis of GLUT4-containing vesicles in adipocytes. The polypeptide is Ras-related protein Rab-3D (Homo sapiens (Human)).